The following is a 241-amino-acid chain: MKVLLVFDFDNTIIDDNSDTWIIQCAPDKKLPIELQDSYQKGLWTEFMGRVFKYLRDEGVKEEELKRAVTSLPFTSGMIELLSFLRMNKDRFDCIIISDSNSIFIDWVLEAAAFHDVFDTVFTNPASFDSTGRLTVRNCHTHACTRCPKNLCKNTVLGEFIDKQLQKGVRYTRIVYIGDGGNDVCPVTFLKKNDVAMPREGYTLHRTLDKMSQNLEPMASSIVVWSSGMEIISHLQFLIQM.

The Nucleophile role is filled by Asp8. Positions 8 and 10 each coordinate Mg(2+). Asp10 (proton donor) is an active-site residue. 2 residues coordinate substrate: Asp19 and Asp99. A Mg(2+)-binding site is contributed by Asp179.

Belongs to the HAD-like hydrolase superfamily. PHOSPHO family. Requires Mg(2+) as cofactor.

The enzyme catalyses pyridoxal 5'-phosphate + H2O = pyridoxal + phosphate. Functionally, phosphatase that has high activity toward pyridoxal 5'-phosphate (PLP). Also active at much lower level toward pyrophosphate, phosphoethanolamine (PEA), phosphocholine (PCho), phospho-l-tyrosine, fructose-6-phosphate, p-nitrophenyl phosphate, and h-glycerophosphate. The polypeptide is Pyridoxal phosphate phosphatase PHOSPHO2 (Phospho2) (Rattus norvegicus (Rat)).